The sequence spans 384 residues: Outer membrane protein assembly factor BamB (384 aa).

The signal sequence occupies residues 1-16 (MKIRILVLILCALTQG). Cysteine 17 is lipidated: N-palmitoyl cysteine. The S-diacylglycerol cysteine moiety is linked to residue cysteine 17.

It belongs to the BamB family. As to quaternary structure, part of the Bam complex.

It is found in the cell outer membrane. Its function is as follows. Part of the outer membrane protein assembly complex, which is involved in assembly and insertion of beta-barrel proteins into the outer membrane. The protein is Outer membrane protein assembly factor BamB of Legionella pneumophila (strain Paris).